The primary structure comprises 254 residues: MNADSKAPDFLVVIPARLGSTRLPRKPLADIGGKPMVIRVAERAKQSLAHSVVVATDSPEIQAACDEHRIECLLTSENHPTGTDRIAEVAQLLKLPANALVVNVQGDEPLIPPKLINQVARTLAEHEQCVISTVAVPITDAAEINNPNVVKVVLNRSGEALYFSRAPIPFVRDPQSSQKTMHLRHLGIYAYRADFLQAYTRLEPASPEQAEALEQLRALWNGYRIAVHTAPEAPPAGVDTPEDLERVRQLLARS.

The protein belongs to the KdsB family.

The protein resides in the cytoplasm. The catalysed reaction is 3-deoxy-alpha-D-manno-oct-2-ulosonate + CTP = CMP-3-deoxy-beta-D-manno-octulosonate + diphosphate. It participates in nucleotide-sugar biosynthesis; CMP-3-deoxy-D-manno-octulosonate biosynthesis; CMP-3-deoxy-D-manno-octulosonate from 3-deoxy-D-manno-octulosonate and CTP: step 1/1. It functions in the pathway bacterial outer membrane biogenesis; lipopolysaccharide biosynthesis. In terms of biological role, activates KDO (a required 8-carbon sugar) for incorporation into bacterial lipopolysaccharide in Gram-negative bacteria. This Polynucleobacter necessarius subsp. necessarius (strain STIR1) protein is 3-deoxy-manno-octulosonate cytidylyltransferase.